A 308-amino-acid chain; its full sequence is MKQIHVIDSHTGGEPTRLVMKGFPQLHGRSMAEQRDELRELHDRWRRACLLEPRGNDVLVGALYCPPVSADATCGVIFFNNAGYLNMCGHGTIGLVASLQHLGLIAPGVHKIDTPVGQVSATLHEDGAITVANVPSYRYRQHVAVNVPGHGVVHGDIAWGGNWFFLVAEHGQRIELDNREVLTEYTWAMLKALEAQGITGENGAPIDHVELFADDPNADSRNFVMCPGKAYDRSPCGTGTSAKLACLAADGTLAEGQTWVQASITGSQFHGRYERDGERIRPFITGRAHMTADSTLLIDEQDPFAWGI.

Catalysis depends on C88, which acts as the Proton acceptor. Substrate is bound by residues 89–90 (GH), H208, and D232. Catalysis depends on C236, which acts as the Proton donor. 237–238 (GT) is a substrate binding site.

This sequence belongs to the proline racemase family.

The catalysed reaction is trans-4-hydroxy-L-proline = cis-4-hydroxy-D-proline. Its function is as follows. Catalyzes the epimerization of trans-4-hydroxy-L-proline (t4LHyp) to cis-4-hydroxy-D-proline (c4DHyp). Is likely involved in a degradation pathway that converts t4LHyp to alpha-ketoglutarate. Can also catalyze the epimerization of trans-3-hydroxy-L-proline (t3LHyp) to cis-3-hydroxy-D-proline (c3DHyp), albeit with 200-fold lower efficiency. This chain is 4-hydroxyproline 2-epimerase, found in Pseudomonas putida (strain ATCC 700007 / DSM 6899 / JCM 31910 / BCRC 17059 / LMG 24140 / F1).